Here is a 234-residue protein sequence, read N- to C-terminus: MRDEVFKRPIKKQFEFDESVVSVFDDMVSRSVPYYCDVQALISLILSKNLSPNAKVFDLGCSTATTLLEIFKLRSDLSLNGVDSSEAMIKTARNRSLAYLANLNLYVSDILDFDFSGSDAVILNYTLQFIRPIKREEFIKKIYSNLKSGGIFIFSEKLVYEDKKLTLDMIEIYENYKHSQGYSKFEIAQKRQALENILIPYSENENKELCLNAGFKSVETIFKWANFATFIAFK.

S-adenosyl-L-methionine-binding positions include Tyr35, 60-62 (GCS), 109-110 (DI), Asn124, and Arg191.

The protein belongs to the class I-like SAM-binding methyltransferase superfamily. Cx-SAM synthase family. In terms of assembly, homodimer.

It carries out the reaction prephenate + S-adenosyl-L-methionine = carboxy-S-adenosyl-L-methionine + 3-phenylpyruvate + H2O. Catalyzes the conversion of S-adenosyl-L-methionine (SAM) to carboxy-S-adenosyl-L-methionine (Cx-SAM). This Campylobacter fetus subsp. fetus (strain 82-40) protein is Carboxy-S-adenosyl-L-methionine synthase.